We begin with the raw amino-acid sequence, 94 residues long: MDWTKMTFMGTVDEVKEIWNGLEEAGRLYAVWLSDDHVYGIVDVNEEGLFCLGWVSDISPESLQNMLGGGAELFESYEDVLSEHGGSIAIRVEV.

In Bacillus subtilis (Bacteriophage SP01), this protein is Putative gene 47 protein (47).